Here is a 589-residue protein sequence, read N- to C-terminus: Oligo-1,6-glucosidase IMA3 (589 aa).

The active-site Nucleophile is the Asp-215. Glu-277 functions as the Proton donor in the catalytic mechanism.

The protein belongs to the glycosyl hydrolase 13 family.

It is found in the cytoplasm. It carries out the reaction Hydrolysis of (1-&gt;6)-alpha-D-glucosidic linkages in some oligosaccharides produced from starch and glycogen by alpha-amylase, and in isomaltose.. In terms of biological role, alpha-glucosidase with broad substrate specificity for alpha-1,4- and alpha-1,6-glucosides. Not required for isomaltose utilization, but overexpression allows the IMA1 null mutant to grow on isomaltose. The sequence is that of Oligo-1,6-glucosidase IMA3 (IMA3) from Saccharomyces cerevisiae (strain ATCC 204508 / S288c) (Baker's yeast).